Consider the following 380-residue polypeptide: Proline iminopeptidase (380 aa).

In terms of domain architecture, AB hydrolase-1 spans 98-360 (PVVFLHGGPG…IVYDAGHSAN (263 aa)). The active-site Nucleophile is Ser-172. Asp-329 is a catalytic residue. His-357 acts as the Proton donor in catalysis.

This sequence belongs to the peptidase S33 family.

The protein localises to the cytoplasm. It carries out the reaction Release of N-terminal proline from a peptide.. Functionally, specifically catalyzes the removal of N-terminal proline residues from peptides. The chain is Proline iminopeptidase (PIP) from Arabidopsis thaliana (Mouse-ear cress).